The chain runs to 241 residues: Spheroidene monooxygenase (241 aa).

The protein belongs to the CrtA family. Requires heme as cofactor.

The catalysed reaction is spheroidene + 4 reduced [2Fe-2S]-[ferredoxin] + 2 O2 + 4 H(+) = spheroiden-2-one + 4 oxidized [2Fe-2S]-[ferredoxin] + 3 H2O. The enzyme catalyses spirilloxanthin + 4 reduced [2Fe-2S]-[ferredoxin] + 2 O2 + 4 H(+) = 2-oxospirilloxanthin + 4 oxidized [2Fe-2S]-[ferredoxin] + 3 H2O. It catalyses the reaction 2-oxospirilloxanthin + 4 reduced [2Fe-2S]-[ferredoxin] + 2 O2 + 4 H(+) = 2,2'-dioxospirilloxanthin + 4 oxidized [2Fe-2S]-[ferredoxin] + 3 H2O. It carries out the reaction spheroidene + 2 reduced [2Fe-2S]-[ferredoxin] + O2 + 2 H(+) = 2-hydroxyspheroidene + 2 oxidized [2Fe-2S]-[ferredoxin] + H2O. The catalysed reaction is 2-hydroxyspheroidene + 2 reduced [2Fe-2S]-[ferredoxin] + O2 + 2 H(+) = 2,2-dihydroxyspheroidene + 2 oxidized [2Fe-2S]-[ferredoxin] + H2O. The enzyme catalyses 2,2-dihydroxyspheroidene = spheroiden-2-one + H2O. It catalyses the reaction spirilloxanthin + 2 reduced [2Fe-2S]-[ferredoxin] + O2 + 2 H(+) = 2-hydroxyspirilloxanthin + 2 oxidized [2Fe-2S]-[ferredoxin] + H2O. It carries out the reaction 2-hydroxyspirilloxanthin + 2 reduced [2Fe-2S]-[ferredoxin] + O2 + 2 H(+) = 2,2-dihydroxyspirilloxanthin + 2 oxidized [2Fe-2S]-[ferredoxin] + H2O. The catalysed reaction is 2,2-dihydroxyspirilloxanthin = 2-oxospirilloxanthin + H2O. The enzyme catalyses 2-oxospirilloxanthin + 2 reduced [2Fe-2S]-[ferredoxin] + O2 + 2 H(+) = 2'-hydroxy-2-oxospirilloxanthin + 2 oxidized [2Fe-2S]-[ferredoxin] + H2O. It catalyses the reaction 2'-hydroxy-2-oxospirilloxanthin + 2 reduced [2Fe-2S]-[ferredoxin] + O2 + 2 H(+) = 2',2'-dihydroxy-2-oxospirilloxanthin + 2 oxidized [2Fe-2S]-[ferredoxin] + H2O. It carries out the reaction 2',2'-dihydroxy-2-oxospirilloxanthin = 2,2'-dioxospirilloxanthin + H2O. The protein operates within carotenoid biosynthesis; spheroidene biosynthesis. In terms of biological role, involved in the biosynthesis of the carotenoid spheroidene. Catalyzes the introduction of one keto group at the C-2 position of spheroidene. In vitro, can also catalyze the introduction of two keto groups at the C-2 and C-2' positions of spirilloxanthin, but spirilloxanthin biosynthesis pathway is not present in R.capsulatus. In Rhodobacter capsulatus (strain ATCC BAA-309 / NBRC 16581 / SB1003), this protein is Spheroidene monooxygenase.